Consider the following 312-residue polypeptide: Protoheme IX farnesyltransferase (312 aa).

The next 9 helical transmembrane spans lie at 31–51, 58–78, 107–127, 130–150, 157–177, 184–204, 229–249, 250–270, and 286–306; these read LLMK…GLFI, PLLS…AGAI, TALT…AICV, ISSI…TMWL, NIVI…SAVT, CLML…TLSL, YSIL…YFTD, IAGL…LCYA, and FKYS…EHCI.

Belongs to the UbiA prenyltransferase family. Protoheme IX farnesyltransferase subfamily.

It localises to the cell inner membrane. It carries out the reaction heme b + (2E,6E)-farnesyl diphosphate + H2O = Fe(II)-heme o + diphosphate. Its pathway is porphyrin-containing compound metabolism; heme O biosynthesis; heme O from protoheme: step 1/1. Its function is as follows. Converts heme B (protoheme IX) to heme O by substitution of the vinyl group on carbon 2 of heme B porphyrin ring with a hydroxyethyl farnesyl side group. This chain is Protoheme IX farnesyltransferase, found in Orientia tsutsugamushi (strain Ikeda) (Rickettsia tsutsugamushi).